Consider the following 235-residue polypeptide: tRNA1(Val) (adenine(37)-N6)-methyltransferase (235 aa).

It belongs to the methyltransferase superfamily. tRNA (adenine-N(6)-)-methyltransferase family.

The protein localises to the cytoplasm. The catalysed reaction is adenosine(37) in tRNA1(Val) + S-adenosyl-L-methionine = N(6)-methyladenosine(37) in tRNA1(Val) + S-adenosyl-L-homocysteine + H(+). Its function is as follows. Specifically methylates the adenine in position 37 of tRNA(1)(Val) (anticodon cmo5UAC). This Glaesserella parasuis serovar 5 (strain SH0165) (Haemophilus parasuis) protein is tRNA1(Val) (adenine(37)-N6)-methyltransferase.